The chain runs to 673 residues: Vasorin (673 aa).

The first 24 residues, 1 to 24 (MHSRSCLPPLLLLLLVLLGSGVQG), serve as a signal peptide directing secretion. The LRRNT domain occupies 25–53 (CPSGCQCNQPQTVFCTARQGTTVPRDVPP). The Extracellular portion of the chain corresponds to 25 to 576 (CPSGCQCNQP…VTQAREGNLP (552 aa)). LRR repeat units lie at residues 54–75 (DTVG…CFAG), 78–99 (GLQL…IFQP), 102–123 (NLSN…TFRG), 126–147 (RLER…AFDA), 150–170 (RLLE…LHLP), 171–192 (RLLL…ILDT), 194–215 (NVEA…LFGR), 218–239 (NLHD…IQGL), 241–265 (GLTR…AGLT), and 266–288 (ALQE…SSLF). N102 and N118 each carry an N-linked (GlcNAc...) asparagine glycan. N-linked (GlcNAc...) asparagine glycosylation is present at N274. In terms of domain architecture, LRRCT spans 299 to 352 (NPFNCLCPLSWFGPWVRENHVVLASPEETRCHFPPKNAGRLLLDLDYADFGCPV). The disordered stretch occupies residues 369–389 (PTLSTSSQAPTWPSLTEPTTQ). The span at 370 to 389 (TLSTSSQAPTWPSLTEPTTQ) shows a compositional bias: polar residues. Residues 406 to 443 (QPQDCPASICLNGGSCRLGARHHWECLCPEGFIGLYCE) form the EGF-like domain. Intrachain disulfides connect C410–C421, C415–C431, and C433–C442. One can recognise a Fibronectin type-III domain in the interval 463 to 559 (PLLPLSIEPV…ACGEANTSQA (97 aa)). Residues N501, N529, and N555 are each glycosylated (N-linked (GlcNAc...) asparagine). The chain crosses the membrane as a helical span at residues 577 to 597 (LLIAPALAAVLLAVLAAAGAA). At 598-673 (YCVRRARATS…QGVLPAKHYI (76 aa)) the chain is on the cytoplasmic side. The tract at residues 608-648 (TAQDKGQVGPGTGPLELEGVKAPLEPGSKATEGGGEALSGG) is disordered.

Interacts with TGFB1, TGFB2 and TGFB3. N-glycosylated.

The protein resides in the membrane. May act as an inhibitor of TGF-beta signaling. The sequence is that of Vasorin (Vasn) from Mus musculus (Mouse).